The chain runs to 337 residues: Beta-hexosaminidase (337 aa).

Substrate contacts are provided by residues aspartate 62, arginine 70, arginine 133, and 163–164; that span reads KH. Residue histidine 176 is the Proton donor/acceptor of the active site. Aspartate 248 (nucleophile) is an active-site residue.

This sequence belongs to the glycosyl hydrolase 3 family. NagZ subfamily.

It is found in the cytoplasm. The catalysed reaction is Hydrolysis of terminal non-reducing N-acetyl-D-hexosamine residues in N-acetyl-beta-D-hexosaminides.. Its pathway is cell wall biogenesis; peptidoglycan recycling. Plays a role in peptidoglycan recycling by cleaving the terminal beta-1,4-linked N-acetylglucosamine (GlcNAc) from peptide-linked peptidoglycan fragments, giving rise to free GlcNAc, anhydro-N-acetylmuramic acid and anhydro-N-acetylmuramic acid-linked peptides. This Psychromonas ingrahamii (strain DSM 17664 / CCUG 51855 / 37) protein is Beta-hexosaminidase.